Reading from the N-terminus, the 171-residue chain is 3-hydroxydecanoyl-[acyl-carrier-protein] dehydratase (171 aa).

The active site involves His71.

Belongs to the thioester dehydratase family. FabA subfamily. As to quaternary structure, homodimer.

The protein localises to the cytoplasm. The enzyme catalyses a (3R)-hydroxyacyl-[ACP] = a (2E)-enoyl-[ACP] + H2O. It catalyses the reaction (3R)-hydroxydecanoyl-[ACP] = (2E)-decenoyl-[ACP] + H2O. The catalysed reaction is (2E)-decenoyl-[ACP] = (3Z)-decenoyl-[ACP]. It participates in lipid metabolism; fatty acid biosynthesis. Its function is as follows. Necessary for the introduction of cis unsaturation into fatty acids. Catalyzes the dehydration of (3R)-3-hydroxydecanoyl-ACP to E-(2)-decenoyl-ACP and then its isomerization to Z-(3)-decenoyl-ACP. Can catalyze the dehydratase reaction for beta-hydroxyacyl-ACPs with saturated chain lengths up to 16:0, being most active on intermediate chain length. The chain is 3-hydroxydecanoyl-[acyl-carrier-protein] dehydratase from Rhizobium meliloti (strain 1021) (Ensifer meliloti).